Reading from the N-terminus, the 209-residue chain is Large ribosomal subunit protein bL25 (209 aa).

Residues 190–209 (GLKSADDEAEGEDAEEAAAE) form a disordered region. Residues 196–209 (DEAEGEDAEEAAAE) show a composition bias toward acidic residues.

This sequence belongs to the bacterial ribosomal protein bL25 family. CTC subfamily. Part of the 50S ribosomal subunit; part of the 5S rRNA/L5/L18/L25 subcomplex. Contacts the 5S rRNA. Binds to the 5S rRNA independently of L5 and L18.

Its function is as follows. This is one of the proteins that binds to the 5S RNA in the ribosome where it forms part of the central protuberance. In Ruegeria sp. (strain TM1040) (Silicibacter sp.), this protein is Large ribosomal subunit protein bL25.